The primary structure comprises 503 residues: MTDKSQAPEVDVNEQIAQRKAKLSALRDKGIAFPNDFRRDSLAADLHAEYDNLSKEELAEKGIRVKVAGRMMTRRIMGKASFATIQDMSGKIQLYVARDNLPEGYYNTEFKKWDLGDILGASGTLFITGTGELSVQVDEVRLLTKALRPLPDKFHGLSDQEMRYRQRYLDLITNEESRSTFMARSKIIDYIRRFLSDRQFLEVETPMMQAIPGGAAARPFSTHHNALDMELFLRIAPELYLKRLVVGGFEKVFEINRNFRNEGLSTRHNPEFTMLEFYWAYADYHDLMDLTEQMLRGAAESVLGSAQFTSQGVDYDFGKPFERMTVLEAIVKYMPEVSLEQLNDMNTATEIAEQVGVSVKPSWGLGKVQIEIFETVAEHRLIQPTFITAYPAEVSPLARRHDDNPFVTDRFEFFAGGRELANGFSELNDAEDQAERFREQVEQKEAGDDEAMFYDEDYVTALEHGMPPTAGQGIGIDRLVMLLTDSASIRDVLLFPHMRPKAD.

Mg(2+) contacts are provided by E412 and E419.

The protein belongs to the class-II aminoacyl-tRNA synthetase family. Homodimer. It depends on Mg(2+) as a cofactor.

It localises to the cytoplasm. The catalysed reaction is tRNA(Lys) + L-lysine + ATP = L-lysyl-tRNA(Lys) + AMP + diphosphate. The sequence is that of Lysine--tRNA ligase from Idiomarina loihiensis (strain ATCC BAA-735 / DSM 15497 / L2-TR).